Reading from the N-terminus, the 106-residue chain is ATP-dependent Clp protease adapter protein ClpS (106 aa).

It belongs to the ClpS family. Binds to the N-terminal domain of the chaperone ClpA.

Functionally, involved in the modulation of the specificity of the ClpAP-mediated ATP-dependent protein degradation. The protein is ATP-dependent Clp protease adapter protein ClpS of Vibrio cholerae serotype O1 (strain ATCC 39541 / Classical Ogawa 395 / O395).